Reading from the N-terminus, the 252-residue chain is Triosephosphate isomerase (252 aa).

Position 9–11 (9–11 (NWK)) interacts with substrate. Histidine 96 (electrophile) is an active-site residue. The active-site Proton acceptor is the glutamate 168. Residues glycine 174, serine 214, and 235–236 (GG) each bind substrate.

It belongs to the triosephosphate isomerase family. Homodimer.

Its subcellular location is the cytoplasm. The enzyme catalyses D-glyceraldehyde 3-phosphate = dihydroxyacetone phosphate. It participates in carbohydrate biosynthesis; gluconeogenesis. Its pathway is carbohydrate degradation; glycolysis; D-glyceraldehyde 3-phosphate from glycerone phosphate: step 1/1. In terms of biological role, involved in the gluconeogenesis. Catalyzes stereospecifically the conversion of dihydroxyacetone phosphate (DHAP) to D-glyceraldehyde-3-phosphate (G3P). The chain is Triosephosphate isomerase from Chloroherpeton thalassium (strain ATCC 35110 / GB-78).